The chain runs to 516 residues: UDP-N-acetylmuramyl-tripeptide synthetase (516 aa).

Position 36 (Ser-36) interacts with UDP-N-acetyl-alpha-D-muramoyl-L-alanyl-D-glutamate. 113–119 (GTKGKTT) contacts ATP. Residues 159-160 (TT), Ser-186, and Arg-194 contribute to the UDP-N-acetyl-alpha-D-muramoyl-L-alanyl-D-glutamate site. Residue Lys-228 is modified to N6-carboxylysine.

It belongs to the MurCDEF family. MurE subfamily. Post-translationally, carboxylation is probably crucial for Mg(2+) binding and, consequently, for the gamma-phosphate positioning of ATP.

The protein resides in the cytoplasm. It participates in cell wall biogenesis; peptidoglycan biosynthesis. In terms of biological role, catalyzes the addition of an amino acid to the nucleotide precursor UDP-N-acetylmuramoyl-L-alanyl-D-glutamate (UMAG) in the biosynthesis of bacterial cell-wall peptidoglycan. The sequence is that of UDP-N-acetylmuramyl-tripeptide synthetase from Limosilactobacillus reuteri (strain DSM 20016) (Lactobacillus reuteri).